A 482-amino-acid chain; its full sequence is Transcription termination/antitermination protein NusA (482 aa).

One can recognise an S1 motif domain in the interval 133 to 197; the sequence is NKVVIGYVQQ…NGIEVILSRT (65 aa). Residues 300–446 enclose the KH domain; sequence LHKALVVVSD…NDNDESMEKV (147 aa).

Belongs to the NusA family. In terms of assembly, monomer. Binds directly to the core enzyme of the DNA-dependent RNA polymerase and to nascent RNA.

It localises to the cytoplasm. Participates in both transcription termination and antitermination. The chain is Transcription termination/antitermination protein NusA from Borreliella burgdorferi (strain ATCC 35210 / DSM 4680 / CIP 102532 / B31) (Borrelia burgdorferi).